The sequence spans 158 residues: Large ribosomal subunit protein uL16 (158 aa).

The protein belongs to the universal ribosomal protein uL16 family. Part of the 50S ribosomal subunit.

Binds 23S rRNA and is also seen to make contacts with the A and possibly P site tRNAs. The chain is Large ribosomal subunit protein uL16 from Synechococcus sp. (strain CC9902).